The sequence spans 313 residues: tRNA dimethylallyltransferase (313 aa).

Residue 10-17 (GPTAVGKT) coordinates ATP. 12–17 (TAVGKT) contacts substrate. Positions 35–38 (DSMQ) are interaction with substrate tRNA.

This sequence belongs to the IPP transferase family. As to quaternary structure, monomer. Mg(2+) is required as a cofactor.

The enzyme catalyses adenosine(37) in tRNA + dimethylallyl diphosphate = N(6)-dimethylallyladenosine(37) in tRNA + diphosphate. In terms of biological role, catalyzes the transfer of a dimethylallyl group onto the adenine at position 37 in tRNAs that read codons beginning with uridine, leading to the formation of N6-(dimethylallyl)adenosine (i(6)A). The sequence is that of tRNA dimethylallyltransferase from Alkaliphilus oremlandii (strain OhILAs) (Clostridium oremlandii (strain OhILAs)).